We begin with the raw amino-acid sequence, 396 residues long: MTVQTIRDFLKLESASGLLLIGAMLLAVLCANTPLSWLYDGFLQTRFEIHFGALSLAKPLLLWINDGLMAIFFLLVGLEVKREILEGELSSLPQIALPGIAAVGGMLVPALIYTGINWSAPATLQGWAIPAATDIAFALGVIALLGKNVPGPLKLFLLTLAILDDLGAIVIIALFYTADLSVLSLVLAMIAVAGLFILNRTGVTHIAAYVLLGVFLWICVLKSGVHATLAGVVLAFAIPLRTKDQDGHSLLRHLEHTLHPWVAYGILPIFAFANAGVSLAGISFTDVFSPLPLGIAAGLFVGKQFGIVVFSWIGVKLRMARLPQGVSWGEFHGMAVLCGIGFTMSLFIATLALDGSQETADAARLGVLLGSLMSALSGYYLLKRAVRKRALRAEAP.

11 helical membrane-spanning segments follow: residues 18-38, 60-80, 95-115, 126-146, 155-175, 178-198, 201-221, 262-282, 295-315, 333-353, and 362-382; these read LLLI…LSWL, LLLW…GLEV, IALP…IYTG, GWAI…ALLG, LFLL…IALF, ADLS…LFIL, TGVT…ICVL, VAYG…LAGI, IAAG…WIGV, GMAV…TLAL, and AARL…YYLL.

It belongs to the NhaA Na(+)/H(+) (TC 2.A.33) antiporter family.

The protein resides in the cell inner membrane. The catalysed reaction is Na(+)(in) + 2 H(+)(out) = Na(+)(out) + 2 H(+)(in). Functionally, na(+)/H(+) antiporter that extrudes sodium in exchange for external protons. The protein is Na(+)/H(+) antiporter NhaA 1 of Syntrophotalea carbinolica (strain DSM 2380 / NBRC 103641 / GraBd1) (Pelobacter carbinolicus).